We begin with the raw amino-acid sequence, 167 residues long: Ribosome maturation factor RimM (167 aa).

The PRC barrel domain maps to 92 to 166 (DGVYYYRELL…EVRVELMEGL (75 aa)).

Belongs to the RimM family. As to quaternary structure, binds ribosomal protein uS19.

The protein resides in the cytoplasm. Its function is as follows. An accessory protein needed during the final step in the assembly of 30S ribosomal subunit, possibly for assembly of the head region. Essential for efficient processing of 16S rRNA. May be needed both before and after RbfA during the maturation of 16S rRNA. It has affinity for free ribosomal 30S subunits but not for 70S ribosomes. In Lactobacillus delbrueckii subsp. bulgaricus (strain ATCC 11842 / DSM 20081 / BCRC 10696 / JCM 1002 / NBRC 13953 / NCIMB 11778 / NCTC 12712 / WDCM 00102 / Lb 14), this protein is Ribosome maturation factor RimM.